Here is a 117-residue protein sequence, read N- to C-terminus: Flagellar transcriptional regulator FlhD (117 aa).

Belongs to the FlhD family. As to quaternary structure, homodimer; disulfide-linked. Forms a heterohexamer composed of two FlhC and four FlhD subunits. Each FlhC binds a FlhD dimer, forming a heterotrimer, and a hexamer assembles by dimerization of two heterotrimers.

Its subcellular location is the cytoplasm. Functions in complex with FlhC as a master transcriptional regulator that regulates transcription of several flagellar and non-flagellar operons by binding to their promoter region. Activates expression of class 2 flagellar genes, including fliA, which is a flagellum-specific sigma factor that turns on the class 3 genes. Also regulates genes whose products function in a variety of physiological pathways. In Photorhabdus laumondii subsp. laumondii (strain DSM 15139 / CIP 105565 / TT01) (Photorhabdus luminescens subsp. laumondii), this protein is Flagellar transcriptional regulator FlhD.